Here is a 600-residue protein sequence, read N- to C-terminus: Glutamine--fructose-6-phosphate aminotransferase [isomerizing] (600 aa).

The active-site Nucleophile; for GATase activity is cysteine 2. One can recognise a Glutamine amidotransferase type-2 domain in the interval 2 to 217 (CGIVGFIGEQ…DKEIVIVTKE (216 aa)). 2 consecutive SIS domains span residues 283–422 (IRNA…AKGE) and 452–590 (LAKQ…VDKP). Catalysis depends on lysine 595, which acts as the For Fru-6P isomerization activity.

As to quaternary structure, homodimer.

It localises to the cytoplasm. It carries out the reaction D-fructose 6-phosphate + L-glutamine = D-glucosamine 6-phosphate + L-glutamate. Functionally, catalyzes the first step in hexosamine metabolism, converting fructose-6P into glucosamine-6P using glutamine as a nitrogen source. In Bacillus cereus (strain ATCC 10987 / NRS 248), this protein is Glutamine--fructose-6-phosphate aminotransferase [isomerizing].